Here is a 501-residue protein sequence, read N- to C-terminus: MHQDNEQLSLNDQMQRRFDERRHLQESGINPYPCSFEVTGHSRQIIEHFKEDAEEKVSVAGRIMAIRRMGKASFFHIQDSDGRMQIYLKKDEVGDDAYATFKLLDIGDIVGVNGYTFRTRTGEISVHAESFELLCKSLRPIPVAKEKEVEGEKVVFDAFADRELRYRQRYVDLIVNPEVRSTFIKRSAIVSHIRSFFTSQGWLEVETPILQPIYGGAAARPFTTHHNALDMQLYLRIANELYLKRLIVGGFDGVFEFAKDFRNEGIDRFHNPEFTQVELYVAYKDYDWMMRLVEELFQQTAIAVNGTAMTTFLGHEISLEAPFRRLTIADSIREYTGAEIEGKTETELRNLAKDLGLELDPKIGSGKIIDEIFGEFVEPKLIQPTFITDYPTEMSPLAKPHRSKPGLVERFELIAGGKEICNSFSELNDPVIQRQRLEEQASLRQRGDDEAMVVDEDFLRALEYGMPPTAGLGIGIDRLVMLITGEESIRDVIFFPHLKPE.

2 residues coordinate Mg(2+): glutamate 412 and glutamate 419.

It belongs to the class-II aminoacyl-tRNA synthetase family. Homodimer. Mg(2+) is required as a cofactor.

Its subcellular location is the cytoplasm. The catalysed reaction is tRNA(Lys) + L-lysine + ATP = L-lysyl-tRNA(Lys) + AMP + diphosphate. This chain is Lysine--tRNA ligase, found in Chlorobium luteolum (strain DSM 273 / BCRC 81028 / 2530) (Pelodictyon luteolum).